The sequence spans 224 residues: 2-C-methyl-D-erythritol 4-phosphate cytidylyltransferase (224 aa).

It belongs to the IspD/TarI cytidylyltransferase family. IspD subfamily.

The enzyme catalyses 2-C-methyl-D-erythritol 4-phosphate + CTP + H(+) = 4-CDP-2-C-methyl-D-erythritol + diphosphate. The protein operates within isoprenoid biosynthesis; isopentenyl diphosphate biosynthesis via DXP pathway; isopentenyl diphosphate from 1-deoxy-D-xylulose 5-phosphate: step 2/6. Catalyzes the formation of 4-diphosphocytidyl-2-C-methyl-D-erythritol from CTP and 2-C-methyl-D-erythritol 4-phosphate (MEP). This Bordetella petrii (strain ATCC BAA-461 / DSM 12804 / CCUG 43448) protein is 2-C-methyl-D-erythritol 4-phosphate cytidylyltransferase.